Reading from the N-terminus, the 78-residue chain is uncharacterized protein (78 aa).

2 helical membrane passes run 13–35 (AGVG…PTGI) and 50–72 (GTTF…FYYF).

It is found in the cell membrane. This is an uncharacterized protein from Pasteurella multocida (strain Pm70).